A 198-amino-acid polypeptide reads, in one-letter code: HTH-type transcriptional regulator BetI (198 aa).

Positions 8–68 (PIRRQQLIEA…ATMRYLIRHL (61 aa)) constitute an HTH tetR-type domain. The segment at residues 31–50 (SIAQIAKRAGVSNGIISHYF) is a DNA-binding region (H-T-H motif).

The protein operates within amine and polyamine biosynthesis; betaine biosynthesis via choline pathway [regulation]. Its function is as follows. Repressor involved in the biosynthesis of the osmoprotectant glycine betaine. It represses transcription of the choline transporter BetT and the genes of BetAB involved in the synthesis of glycine betaine. In Yersinia pseudotuberculosis serotype O:1b (strain IP 31758), this protein is HTH-type transcriptional regulator BetI.